The following is a 968-amino-acid chain: RNA polymerase-associated protein RapA (968 aa).

One can recognise a Helicase ATP-binding domain in the interval Asp-164–Asn-334. Position 177–184 (Asp-177–Thr-184) interacts with ATP. A DEAH box motif is present at residues Asp-280 to His-283. The Helicase C-terminal domain maps to Arg-490 to Asp-644.

Belongs to the SNF2/RAD54 helicase family. RapA subfamily. Interacts with the RNAP. Has a higher affinity for the core RNAP than for the holoenzyme. Its ATPase activity is stimulated by binding to RNAP.

In terms of biological role, transcription regulator that activates transcription by stimulating RNA polymerase (RNAP) recycling in case of stress conditions such as supercoiled DNA or high salt concentrations. Probably acts by releasing the RNAP, when it is trapped or immobilized on tightly supercoiled DNA. Does not activate transcription on linear DNA. Probably not involved in DNA repair. The chain is RNA polymerase-associated protein RapA from Enterobacter sp. (strain 638).